The chain runs to 492 residues: Bifunctional protein GlmU (492 aa).

The interval 1–241 (MIPENTGPAA…RWQVEGANDR (241 aa)) is pyrophosphorylase. Residues 14-17 (LAAG), Lys28, Gln81, 86-87 (GT), 112-114 (YGD), Gly151, Glu166, Asn181, and Asn239 each bind UDP-N-acetyl-alpha-D-glucosamine. Asp114 serves as a coordination point for Mg(2+). Asn239 serves as a coordination point for Mg(2+). Residues 242–262 (VQLAALGAELNRRTVEAWMRA) are linker. Residues 263–492 (GVTVVDPSTT…STPASTEEGK (230 aa)) are N-acetyltransferase. The UDP-N-acetyl-alpha-D-glucosamine site is built by Arg344 and Lys362. His374 acts as the Proton acceptor in catalysis. Tyr377 and Asn388 together coordinate UDP-N-acetyl-alpha-D-glucosamine. Residues 397 to 398 (NY), Ser416, and Ala434 contribute to the acetyl-CoA site. The tract at residues 460–492 (WVPANRPGSRSAELAQAAINNSSSTPASTEEGK) is disordered. The segment covering 477–492 (AINNSSSTPASTEEGK) has biased composition (polar residues).

This sequence in the N-terminal section; belongs to the N-acetylglucosamine-1-phosphate uridyltransferase family. The protein in the C-terminal section; belongs to the transferase hexapeptide repeat family. In terms of assembly, homotrimer. Mg(2+) is required as a cofactor.

It localises to the cytoplasm. It carries out the reaction alpha-D-glucosamine 1-phosphate + acetyl-CoA = N-acetyl-alpha-D-glucosamine 1-phosphate + CoA + H(+). It catalyses the reaction N-acetyl-alpha-D-glucosamine 1-phosphate + UTP + H(+) = UDP-N-acetyl-alpha-D-glucosamine + diphosphate. The protein operates within nucleotide-sugar biosynthesis; UDP-N-acetyl-alpha-D-glucosamine biosynthesis; N-acetyl-alpha-D-glucosamine 1-phosphate from alpha-D-glucosamine 6-phosphate (route II): step 2/2. It functions in the pathway nucleotide-sugar biosynthesis; UDP-N-acetyl-alpha-D-glucosamine biosynthesis; UDP-N-acetyl-alpha-D-glucosamine from N-acetyl-alpha-D-glucosamine 1-phosphate: step 1/1. Its pathway is bacterial outer membrane biogenesis; LPS lipid A biosynthesis. Catalyzes the last two sequential reactions in the de novo biosynthetic pathway for UDP-N-acetylglucosamine (UDP-GlcNAc). The C-terminal domain catalyzes the transfer of acetyl group from acetyl coenzyme A to glucosamine-1-phosphate (GlcN-1-P) to produce N-acetylglucosamine-1-phosphate (GlcNAc-1-P), which is converted into UDP-GlcNAc by the transfer of uridine 5-monophosphate (from uridine 5-triphosphate), a reaction catalyzed by the N-terminal domain. This chain is Bifunctional protein GlmU, found in Pseudarthrobacter chlorophenolicus (strain ATCC 700700 / DSM 12829 / CIP 107037 / JCM 12360 / KCTC 9906 / NCIMB 13794 / A6) (Arthrobacter chlorophenolicus).